Consider the following 389-residue polypeptide: Chalcone synthase 5 (389 aa).

Cys-164 is a catalytic residue.

The protein belongs to the thiolase-like superfamily. Chalcone/stilbene synthases family.

The catalysed reaction is (E)-4-coumaroyl-CoA + 3 malonyl-CoA + 3 H(+) = 2',4,4',6'-tetrahydroxychalcone + 3 CO2 + 4 CoA. It participates in secondary metabolite biosynthesis; flavonoid biosynthesis. In terms of biological role, the primary product of this enzyme is 4,2',4',6'-tetrahydroxychalcone (also termed naringenin-chalcone or chalcone) which can under specific conditions spontaneously isomerize into naringenin. This is Chalcone synthase 5 (CHS5) from Trifolium subterraneum (Subterranean clover).